Here is a 312-residue protein sequence, read N- to C-terminus: DNA-directed RNA polymerase subunit alpha (312 aa).

Residues 1–226 form an alpha N-terminal domain (alpha-NTD) region; sequence MIEFEKPIIT…EHLNLFTDLT (226 aa). An alpha C-terminal domain (alpha-CTD) region spans residues 243–312; the sequence is DEKVLDRTIE…DLGLGLKNDK (70 aa).

This sequence belongs to the RNA polymerase alpha chain family. In terms of assembly, homodimer. The RNAP catalytic core consists of 2 alpha, 1 beta, 1 beta' and 1 omega subunit. When a sigma factor is associated with the core the holoenzyme is formed, which can initiate transcription.

The catalysed reaction is RNA(n) + a ribonucleoside 5'-triphosphate = RNA(n+1) + diphosphate. Functionally, DNA-dependent RNA polymerase catalyzes the transcription of DNA into RNA using the four ribonucleoside triphosphates as substrates. In Streptococcus mutans serotype c (strain ATCC 700610 / UA159), this protein is DNA-directed RNA polymerase subunit alpha.